The primary structure comprises 960 residues: MAAYGVNFESANSIKSRKESKREERERVIQKAKEKFEKEERRKAERKARGEDTWMLPDVDLRLQQIGEEHTVKTKKAKKEKKAKKSKKEKKKKAKKEKKDEGDASCDSSEDSEDEWVEATLPSGGKDKSLEGEPEATPSSSSASNNQRDEWMTFDFLAMKTTSVADRRAQKEAEKEAERQKAQAIEQAGLHRLELNPYWKDGGSGLPPEESSSTAVKKAGVVNDGGVSWLRKSYQRMKEQADREQRSLDSVVAERYGSMEEFQKRLKEAEDAAYGERRDDEKERGRREEGKESWRRNDREEGRERWRRDEEKDRWRRNDRDEGRERWRREDGDEEKERWRKDGWRRGENEDRRRERSPNAERERARSRDDLSSKFLKPSEDEEVSRGAGFKKGSSSNQSAAFRKPVDDVEMSREAGFKKGSSSNQNAAFRKPVDDEMSRGTAFKKGSSSNQSAAFRKPVDGDHDDDEMSRGAEFRKSSSSNQSAAFRKPIDNNNDGRGVAAAWRKSSAVQDSETPTLQKHTEKSAALQEDSKTTTTVSSSESEEEEEEELILTDEEMNKLGAKIVKAEIMGNTALLEKLRAQMEAARRAKEKRAQIKDQSKRASKPAVSEKEVLLFRTDPSGRAWPVNAPSETLEPRGGRRKRKAIETHQDGERVRYFDDDDGVDLREMVRREKMSSAEDQNALYSRMAAKMMGRTDGDNYTLDDMFVSSAAQKERAGRDEERQRNKAVQETRRLAGRMEKCPHCFDSAELPKHLIIAVGTKVYLCLPNSVSLTEGHCLIVPVQHHTAATGLDEDIWGEIQMFRRALVRMFESQELDCVFLETHMNPKRHLHMVYECVPMPRELGDMAPIYFKKAIMESDEEWAMNKKVVDLSKRDIRQAVPRGLPYFSVDFGLQGGFAHVIENEQKFPHYFGKEILGGMLDLEPRRWRKPIRENFDDQRKKVLKFAQWWKPFDCTKSDS.

4 disordered regions span residues 1-222 (MAAY…AGVV), 261-552 (EFQK…ELIL), 624-648 (AWPV…AIET), and 712-731 (AQKE…AVQE). The stretch at 13 to 101 (SIKSRKESKR…KKAKKEKKDE (89 aa)) forms a coiled coil. Residues 16–52 (SRKESKREERERVIQKAKEKFEKEERRKAERKARGED) show a composition bias toward basic and acidic residues. A compositionally biased stretch (basic residues) spans 73–96 (KTKKAKKEKKAKKSKKEKKKKAKK). A compositionally biased stretch (acidic residues) spans 108 to 117 (SSEDSEDEWV). Residues 135 to 146 (EATPSSSSASNN) are compositionally biased toward low complexity. Residues 163–279 (SVADRRAQKE…EDAAYGERRD (117 aa)) adopt a coiled-coil conformation. Basic and acidic residues-rich tracts occupy residues 165–181 (ADRR…ERQK), 261–372 (EFQK…DDLS), and 404–417 (KPVD…EAGF). The span at 507–518 (SAVQDSETPTLQ) shows a compositional bias: polar residues. The stretch at 540–605 (SESEEEEEEE…IKDQSKRASK (66 aa)) forms a coiled coil. The segment covering 541–552 (ESEEEEEEELIL) has biased composition (acidic residues). The segment covering 713–731 (QKERAGRDEERQRNKAVQE) has biased composition (basic and acidic residues).

Belongs to the CWF19 family.

The polypeptide is CWF19-like protein 2 (cwf19l2) (Danio rerio (Zebrafish)).